The sequence spans 219 residues: Probable nicotinate-nucleotide adenylyltransferase (219 aa).

This sequence belongs to the NadD family.

The enzyme catalyses nicotinate beta-D-ribonucleotide + ATP + H(+) = deamido-NAD(+) + diphosphate. The protein operates within cofactor biosynthesis; NAD(+) biosynthesis; deamido-NAD(+) from nicotinate D-ribonucleotide: step 1/1. Catalyzes the reversible adenylation of nicotinate mononucleotide (NaMN) to nicotinic acid adenine dinucleotide (NaAD). The polypeptide is Probable nicotinate-nucleotide adenylyltransferase (Pseudoalteromonas atlantica (strain T6c / ATCC BAA-1087)).